Here is a 1889-residue protein sequence, read N- to C-terminus: Treslin (1889 aa).

Phosphoserine occurs at positions 295, 599, 820, 861, 919, 934, 1002, 1027, and 1078. The segment covering 812–832 has biased composition (low complexity); it reads DSMSQESMSPPPSSSTHRSVS. The interval 812 to 836 is disordered; that stretch reads DSMSQESMSPPPSSSTHRSVSAITE. Positions 979-1063 are disordered; it reads RLLHRQIKGR…RENFPVQSIQ (85 aa). Polar residues predominate over residues 1020–1050; that stretch reads LSFSRTNSGSFYSVSQPKSRSVQRIHSSQQE. Disordered regions lie at residues 1098–1421, 1471–1508, 1520–1543, 1630–1714, 1730–1751, and 1841–1875; these read EIST…SQFS, LPGE…SSSE, GKQR…SPQT, SCTP…SLEQ, VCQL…ETSW, and QGRT…TLSR. Polar residues predominate over residues 1127 to 1179; it reads TAQTLLYTPERLQNSPTEMTSAEGTISEATIKTPSSHGYNSPFASKVTSQKTV. Thr-1134 carries the post-translational modification Phosphothreonine. Ser-1141 carries the post-translational modification Phosphoserine. The span at 1187–1197 shows a compositional bias: low complexity; sequence SPPLTKLPSTP. Positions 1203–1219 are enriched in polar residues; sequence QPPQCSSDCTWPHSVNS. The span at 1339-1351 shows a compositional bias: low complexity; sequence TSPSVTSSVSCPV. The span at 1373-1382 shows a compositional bias: basic residues; that stretch reads KLRRSCRKKS. Phosphoserine is present on Ser-1406. Residues 1496–1508 show a composition bias toward low complexity; that stretch reads LVPAPSSVSSSSE. Composition is skewed to polar residues over residues 1525-1543 and 1652-1662; these read DAAQ…SPQT and WTPSPKQSGKT. A compositionally biased stretch (basic and acidic residues) spans 1705-1714; sequence PEGKERSLEQ.

Belongs to the treslin family. Interacts with TOPBP1 (via BRCT domains); interaction takes place in a CDK2-dependent manner. Component of the replisome complex composed of at least DONSON, MCM2, MCM7, PCNA and TICRR.

Its subcellular location is the nucleus. Functionally, regulator of DNA replication and S/M and G2/M checkpoints. Regulates the triggering of DNA replication initiation via its interaction with TOPBP1 by participating in CDK2-mediated loading of CDC45L onto replication origins. Required for the transition from pre-replication complex (pre-RC) to pre-initiation complex (pre-IC). Required to prevent mitotic entry after treatment with ionizing radiation. The polypeptide is Treslin (Ticrr) (Mus musculus (Mouse)).